We begin with the raw amino-acid sequence, 579 residues long: Glutamate--tRNA ligase (579 aa).

Residues proline 114–histidine 124 carry the 'HIGH' region motif.

It belongs to the class-I aminoacyl-tRNA synthetase family. Glutamate--tRNA ligase type 2 subfamily.

It is found in the cytoplasm. It carries out the reaction tRNA(Glu) + L-glutamate + ATP = L-glutamyl-tRNA(Glu) + AMP + diphosphate. In terms of biological role, catalyzes the attachment of glutamate to tRNA(Glu) in a two-step reaction: glutamate is first activated by ATP to form Glu-AMP and then transferred to the acceptor end of tRNA(Glu). This chain is Glutamate--tRNA ligase, found in Haloarcula marismortui (strain ATCC 43049 / DSM 3752 / JCM 8966 / VKM B-1809) (Halobacterium marismortui).